Here is a 159-residue protein sequence, read N- to C-terminus: Protein-export protein SecB (159 aa).

Belongs to the SecB family. In terms of assembly, homotetramer, a dimer of dimers. One homotetramer interacts with 1 SecA dimer.

The protein resides in the cytoplasm. Functionally, one of the proteins required for the normal export of preproteins out of the cell cytoplasm. It is a molecular chaperone that binds to a subset of precursor proteins, maintaining them in a translocation-competent state. It also specifically binds to its receptor SecA. The chain is Protein-export protein SecB from Nitrosospira multiformis (strain ATCC 25196 / NCIMB 11849 / C 71).